The following is a 145-amino-acid chain: ATP synthase epsilon chain (145 aa).

Belongs to the ATPase epsilon chain family. As to quaternary structure, F-type ATPases have 2 components, CF(1) - the catalytic core - and CF(0) - the membrane proton channel. CF(1) has five subunits: alpha(3), beta(3), gamma(1), delta(1), epsilon(1). CF(0) has three main subunits: a, b and c.

It localises to the cell membrane. Produces ATP from ADP in the presence of a proton gradient across the membrane. In Buchnera aphidicola subsp. Baizongia pistaciae (strain Bp), this protein is ATP synthase epsilon chain.